The following is a 142-amino-acid chain: Protein spalt-accessory (142 aa).

Positions 1–16 (MKLLIALFVLVNAVIA) are cleaved as a signal peptide. The span at 65–77 (GQGGVSPGQGGFA) shows a compositional bias: gly residues. The tract at residues 65-142 (GQGGVSPGQG…HHEHHGHHRH (78 aa)) is disordered. The span at 112–124 (NHHEYPEHHGDHH) shows a compositional bias: basic and acidic residues. Residues 125–142 (REHHEHHGHHEHHGHHRH) are compositionally biased toward basic residues.

It localises to the secreted. Its function is as follows. Likely to be involved in the establishment of the head. This Drosophila orena (Fruit fly) protein is Protein spalt-accessory (sala).